The primary structure comprises 423 residues: Serine hydroxymethyltransferase (423 aa).

Residues leucine 121 and 125–127 (GHL) contribute to the (6S)-5,6,7,8-tetrahydrofolate site. Position 230 is an N6-(pyridoxal phosphate)lysine (lysine 230). 355–357 (SPF) lines the (6S)-5,6,7,8-tetrahydrofolate pocket.

The protein belongs to the SHMT family. As to quaternary structure, homodimer. Pyridoxal 5'-phosphate is required as a cofactor.

The protein localises to the cytoplasm. It catalyses the reaction (6R)-5,10-methylene-5,6,7,8-tetrahydrofolate + glycine + H2O = (6S)-5,6,7,8-tetrahydrofolate + L-serine. The protein operates within one-carbon metabolism; tetrahydrofolate interconversion. Its pathway is amino-acid biosynthesis; glycine biosynthesis; glycine from L-serine: step 1/1. In terms of biological role, catalyzes the reversible interconversion of serine and glycine with tetrahydrofolate (THF) serving as the one-carbon carrier. This reaction serves as the major source of one-carbon groups required for the biosynthesis of purines, thymidylate, methionine, and other important biomolecules. Also exhibits THF-independent aldolase activity toward beta-hydroxyamino acids, producing glycine and aldehydes, via a retro-aldol mechanism. The polypeptide is Serine hydroxymethyltransferase (Hydrogenovibrio crunogenus (strain DSM 25203 / XCL-2) (Thiomicrospira crunogena)).